Consider the following 152-residue polypeptide: Transcriptional regulator MraZ (152 aa).

SpoVT-AbrB domains are found at residues 5-52 (ATLV…TLPE) and 81-124 (ASEC…DETT).

It belongs to the MraZ family. As to quaternary structure, forms oligomers.

The protein resides in the cytoplasm. It localises to the nucleoid. In terms of biological role, negatively regulates its own expression and that of the subsequent genes in the proximal part of the division and cell wall (dcw) gene cluster. Acts by binding directly to DNA. May also regulate the expression of genes outside the dcw cluster. This chain is Transcriptional regulator MraZ, found in Enterobacter sp. (strain 638).